A 504-amino-acid polypeptide reads, in one-letter code: ADP,ATP carrier protein 3 (504 aa).

Transmembrane regions (helical) follow at residues 23–43, 59–79, 90–110, 146–166, 183–203, 230–250, 296–316, 329–349, 364–384, 386–406, 449–469, and 473–493; these read LKLFIPMALMMLCILFNFGAL, IISFLKLWLVLPACVIFTILY, YVFYIIVGSFLLFFLFFAYII, YGLMYIFAELWSAVVINLMFW, PVLGMVGNIGLILAGSVLVFF, EMLQPIMSIIVAAGVISMLLF, IALLIICYGLLINIVEGPWKA, VHFMGRFNILMGISCVTFMII, LLTPIMLSITGLMFFIFIIFI, EIGSCFGNFNLLYAAIIVGAI, FGKSLGAFIQSLIFIIIPTAT, and IIIYLLVIFIVMISLWIWDVV.

This sequence belongs to the ADP/ATP translocase tlc family.

Its subcellular location is the cell membrane. Functionally, provides the rickettsial cell with host ATP in exchange for rickettsial ADP. This is an obligate exchange system. This energy acquiring activity is an important component of rickettsial parasitism. This chain is ADP,ATP carrier protein 3 (tlcC), found in Rickettsia bellii (strain RML369-C).